Here is a 465-residue protein sequence, read N- to C-terminus: Argininosuccinate lyase (465 aa).

This sequence belongs to the lyase 1 family. Argininosuccinate lyase subfamily.

It localises to the cytoplasm. The enzyme catalyses 2-(N(omega)-L-arginino)succinate = fumarate + L-arginine. It participates in amino-acid biosynthesis; L-arginine biosynthesis; L-arginine from L-ornithine and carbamoyl phosphate: step 3/3. This chain is Argininosuccinate lyase, found in Aromatoleum aromaticum (strain DSM 19018 / LMG 30748 / EbN1) (Azoarcus sp. (strain EbN1)).